The chain runs to 2194 residues: Nucleosome-remodeling factor subunit NURF301-like (2194 aa).

The span at methionine 1 to histidine 12 shows a compositional bias: basic residues. Residues methionine 1–phenylalanine 137 form a disordered region. Over residues alanine 60–serine 79 the composition is skewed to basic and acidic residues. A compositionally biased stretch (polar residues) spans valine 80–threonine 93. A compositionally biased stretch (basic residues) spans serine 94–leucine 112. Positions aspartate 118–phenylalanine 137 are enriched in acidic residues. DDT domains are found at residues threonine 196–glutamate 256 and valine 341–arginine 396. Residues aspartate 347 to asparagine 392 form a PHD-type 1 zinc finger. 5 disordered regions span residues glutamate 1091 to asparagine 1122, alanine 1158 to asparagine 1255, threonine 1413 to serine 1433, methionine 1657 to serine 1701, and glutamate 1834 to glycine 1888. Residues arginine 1151 to serine 1187 adopt a coiled-coil conformation. Residues alanine 1158–arginine 1179 are compositionally biased toward basic and acidic residues. The span at threonine 1665 to threonine 1684 shows a compositional bias: polar residues. A compositionally biased stretch (basic and acidic residues) spans lysine 1852–glutamate 1861. DDT domains follow at residues alanine 1883–arginine 1953 and isoleucine 1948–tyrosine 2014. 2 consecutive PHD-type zinc fingers follow at residues isoleucine 1899–glutamate 1950 and alanine 1959–glutamate 2010. The Bromo domain maps to glutamine 2030 to valine 2134.

The protein belongs to the BPTF family. In terms of assembly, part of a nucleosome remodeling factor-like (NURF-like) complex containing nurf-1 and isw-1.

It is found in the nucleus. In terms of biological role, histone-binding component of a NURF-like (nucleosome remodeling factor-like) complex, which would catalyze ATP-dependent nucleosome sliding and facilitate transcription of chromatin. Involved in vulval cell fates. The sequence is that of Nucleosome-remodeling factor subunit NURF301-like (nurf-1) from Caenorhabditis elegans.